Reading from the N-terminus, the 166-residue chain is 3-dehydroquinate dehydratase (166 aa).

Tyr-22 serves as the catalytic Proton acceptor. The substrate site is built by Asn-73, His-79, and Asp-86. The active-site Proton donor is His-99. Residues Ile-100–Thr-101 and Arg-110 contribute to the substrate site.

It belongs to the type-II 3-dehydroquinase family. Homododecamer.

It carries out the reaction 3-dehydroquinate = 3-dehydroshikimate + H2O. It participates in metabolic intermediate biosynthesis; chorismate biosynthesis; chorismate from D-erythrose 4-phosphate and phosphoenolpyruvate: step 3/7. Catalyzes a trans-dehydration via an enolate intermediate. This chain is 3-dehydroquinate dehydratase, found in Wolinella succinogenes (strain ATCC 29543 / DSM 1740 / CCUG 13145 / JCM 31913 / LMG 7466 / NCTC 11488 / FDC 602W) (Vibrio succinogenes).